A 1088-amino-acid polypeptide reads, in one-letter code: RNA-directed RNA polymerase (1088 aa).

The 187-residue stretch at 501–687 (LSYGDVTRFL…AKRYIAGGKI (187 aa)) folds into the RdRp catalytic domain.

This sequence belongs to the reoviridae RNA-directed RNA polymerase family. In terms of assembly, interacts with VP3 (Potential). Interacts with VP2; this interaction activates VP1. Interacts with NSP5; this interaction is probably necessary for the formation of functional virus factories. Interacts with NSP2; this interaction is weak. Mg(2+) serves as cofactor.

The protein localises to the virion. It carries out the reaction RNA(n) + a ribonucleoside 5'-triphosphate = RNA(n+1) + diphosphate. RNA-directed RNA polymerase that is involved in both transcription and genome replication. Together with VP3 capping enzyme, forms an enzyme complex positioned near the channels situated at each of the five-fold vertices of the core. Following infection, the outermost layer of the virus is lost, leaving a double-layered particle (DLP) made up of the core and VP6 shell. VP1 then catalyzes the transcription of fully conservative plus-strand genomic RNAs that are extruded through the DLP's channels into the cytoplasm where they function as mRNAs for translation of viral proteins. One copy of each of the viral (+)RNAs is also recruited during core assembly, together with newly synthesized polymerase complexes and VP2. The polymerase of these novo-formed particles catalyzes the synthesis of complementary minus-strands leading to dsRNA formation. To do so, the polymerase specifically recognizes and binds 4 bases 5'-UGUG-3' in the conserved 3'-sequence of plus-strand RNA templates. VP2 presumably activates the autoinhibited VP1-RNA complex to coordinate packaging and genome replication. Once dsRNA synthesis is complete, the polymerase switches to the transcriptional mode, thus providing secondary transcription. The protein is RNA-directed RNA polymerase of Rotavirus A (isolate RVA/Human/United States/WI61/1983/G9P1A[8]) (RV-A).